A 252-amino-acid polypeptide reads, in one-letter code: RNA-binding protein 7 (252 aa).

The RRM domain maps to 9-86 (RTLFVGNLDP…RQLNIKFKTG (78 aa)). Composition is skewed to polar residues over residues 88 to 107 (SHIN…SPAN) and 119 to 137 (QMGS…PFSS). 2 disordered regions span residues 88–137 (SHIN…PFSS) and 171–252 (QLRG…WKHF). Composition is skewed to basic and acidic residues over residues 211–230 (ERNR…DRSG) and 237–252 (PPDR…WKHF).

Component of the nuclear exosome targeting (NEXT) complex composed of MTREX, ZCCHC8, and RBM7 that directs a subset of non-coding short-lived RNAs for exosomal degradation.

The protein resides in the nucleus. It localises to the nucleoplasm. Its function is as follows. RNA-binding subunit of the trimeric nuclear exosome targeting (NEXT) complex, a complex that functions as an RNA exosome cofactor that directs a subset of non-coding short-lived RNAs for exosomal degradation. NEXT is involved in surveillance and turnover of aberrant transcripts and non-coding RNAs. Binds preferentially polyuridine sequences and associates with newly synthesized RNAs, including pre-mRNAs and short-lived exosome substrates such as promoter upstream transcripts (PROMPTs), enhancer RNAs (eRNAs), and 3'-extended products from small nuclear RNAs (snRNAs). The chain is RNA-binding protein 7 from Danio rerio (Zebrafish).